The sequence spans 265 residues: RNA-binding protein 7 (265 aa).

An N-acetylglycine modification is found at Gly-2. The RRM domain occupies 10–87 (RTLFVGNLET…RPIKIQFRSG (78 aa)). ZCCHC8 binding stretches follow at residues 25–35 (LLFELFHQAGP) and 59–76 (HEVS…IKLF). The disordered stretch occupies residues 91 to 125 (ASQDASVSYPQHHVGNLSPTSTSPNSYERTVGNVS). Polar residues predominate over residues 107–125 (LSPTSTSPNSYERTVGNVS). Ser-136 carries the post-translational modification Phosphoserine; by MAPKAPK2. Ser-137 is modified (phosphoserine). Position 152 is an omega-N-methylarginine (Arg-152). Disordered stretches follow at residues 166 to 224 (DQLG…HGSD) and 237 to 265 (DDRN…SSRH). Residues 170–196 (FSPSAQPHGHTFNQSSSSQWRQDALSS) show a composition bias toward polar residues. Ser-203 is modified (phosphoserine). Basic and acidic residues-rich tracts occupy residues 207–224 (LADR…HGSD) and 237–256 (DDRN…DSSR).

Component of the nuclear exosome targeting (NEXT) complex composed of MTREX, ZCCHC8, and RBM7 that directs a subset of non-coding short-lived RNAs for exosomal degradation. Interacts with ZCCHC8 and SF3B2/SAP145. Binds to MTREX through ZCCHC8. Interacts with YWHAE and YWHAZ; these interactions are stress-dependent and RBM7 phosphorylation dependent; release RNA from the NEXT complex and may affect RNA targeting to the nuclear RNA exosomome for degradation. Interacts with MEPCE and LARP7, the core subunits of 7SK snRNP; upon genotoxic stress this interaction is enhanced, triggering the release of inactive P-TEFb complex from the core and P-TEFb complex activation. Phosphorylated at Ser-136 by MAPK14/p38-alpha-activated MAPKAPK2/MK2; this phosphorylation is stress-dependent; this phosphorylation decreases its RNA-binding capacity therefore affecting RNA nuclear exosome-mediated degradation. This phosphorylation mediates YWHAE and YWHAZ interactions.

The protein resides in the nucleus. It is found in the nucleoplasm. Its function is as follows. RNA-binding subunit of the trimeric nuclear exosome targeting (NEXT) complex, a complex that functions as an RNA exosome cofactor that directs a subset of non-coding short-lived RNAs for exosomal degradation. NEXT is involved in surveillance and turnover of aberrant transcripts and non-coding RNAs. Binds preferentially polyuridine sequences and associates with newly synthesized RNAs, including pre-mRNAs and short-lived exosome substrates such as promoter upstream transcripts (PROMPTs), enhancer RNAs (eRNAs), and 3'-extended products from small nuclear RNAs (snRNAs). Participates in several biological processes including DNA damage response (DDR) and stress response. During stress response, activation of the p38MAPK-MK2 pathway decreases RBM7-RNA-binding and subsequently the RNA exosome degradation activities, thereby modulating the turnover of non-coding transcriptome. Participates in DNA damage response (DDR), through its interaction with MEPCE and LARP7, the core subunits of 7SK snRNP complex, that release the positive transcription elongation factor b (P-TEFb) complex from the 7SK snRNP. In turn, activation of P-TEFb complex induces the transcription of P-TEFb-dependent DDR genes to promote cell viability. The sequence is that of RNA-binding protein 7 from Mus musculus (Mouse).